We begin with the raw amino-acid sequence, 309 residues long: Glutaminase (309 aa).

Positions 64, 114, 160, 167, 191, 243, and 261 each coordinate substrate.

This sequence belongs to the glutaminase family. As to quaternary structure, homotetramer.

It carries out the reaction L-glutamine + H2O = L-glutamate + NH4(+). In Methylobacterium nodulans (strain LMG 21967 / CNCM I-2342 / ORS 2060), this protein is Glutaminase.